The primary structure comprises 551 residues: Tetrachloroethene reductive dehalogenase (551 aa).

Positions 1–39 form a signal peptide, tat-type signal; sequence MGEINRRNFLKVSILGAAAAAVASASAVKGMVSPLVADA. The 4Fe-4S ferredoxin-type 1 domain occupies 411–440; sequence PRKFGVREFCRLCKKCADACPAQAISHEKD. [4Fe-4S] cluster contacts are provided by Cys-420, Cys-423, Cys-426, Cys-430, Cys-467, Cys-478, Cys-481, and Cys-485. The region spanning 478-496 is the 4Fe-4S ferredoxin-type 2 domain; sequence CSNCVAVCSWNKVETWNHD.

This sequence belongs to the PceA family. [4Fe-4S] cluster is required as a cofactor. The cofactor is corrinoid. In terms of processing, predicted to be exported by the Tat system. The position of the signal peptide cleavage has not been experimentally proven.

It is found in the cell membrane. The catalysed reaction is trichloroethene + chloride + A + H(+) = tetrachloroethene + AH2. It carries out the reaction trichloroethene + AH2 = (Z)-1,2-dichloroethene + chloride + A + H(+). In terms of biological role, catalyzes the reductive dechlorination of tetrachloroethene (PCE) to trichloroethene (TCE) and of trichloroethene to cis-1,2-dichloroethene (DCE). This is Tetrachloroethene reductive dehalogenase from Desulfitobacterium hafniense (Desulfitobacterium frappieri).